The sequence spans 463 residues: Myocyte-specific enhancer factor 2C (463 aa).

The MADS-box domain maps to R3–Y57. K4 carries the N6-acetyllysine modification. A DNA-binding region (mef2-type) is located at residues A58–E86. Position 59 is a phosphoserine; by CK2 (S59). Phosphoserine is present on residues S98 and S104. N6-acetyllysine occurs at positions 114 and 117. Positions N178–L223 are disordered. Phosphoserine is present on residues S220 and S226. Residues K232 and K237 each carry the N6-acetyllysine modification. S238 is modified (phosphoserine). N6-acetyllysine occurs at positions 250 and 262. A phosphothreonine; by MAPK7 and MAPK14 mark is found at T283 and T290. The transcription repressor stretch occupies residues A358–R389. A compositionally biased stretch (polar residues) spans S365–I380. A disordered region spans residues S365 to T463. A Glycyl lysine isopeptide (Lys-Gly) (interchain with G-Cter in SUMO) cross-link involves residue K381. S386 carries the phosphoserine; by CDK5 modification. Residue S409 is modified to Phosphoserine; by MAPK7. Low complexity predominate over residues S409–D422. Basic and acidic residues predominate over residues G423–F433. S435 is subject to Phosphoserine.

As to quaternary structure, forms a complex with class II HDACs in undifferentiating cells. On myogenic differentiation, HDACs are released into the cytoplasm allowing MEF2s to interact with other proteins for activation. Interacts with EP300 in differentiating cells; the interaction acetylates MEF2C leading to increased DNA binding and activation. Interacts with HDAC7 and CARM1. Interacts with HDAC4, HDAC7 and HDAC9; the interaction with HDACs represses transcriptional activity. Interacts with LPIN1. Interacts with MYOCD. Interacts with AKAP13. Interacts with FOXK1; the interaction inhibits MEF2C transactivation activity. Interacts (via N-terminus) with HABP4; this interaction decreases DNA-binding activity of MEF2C in myocardial cells in response to mechanical stress. Interacts with JPH2; interaction specifically takes place with the Junctophilin-2 N-terminal fragment cleavage product of JPH2. Interacts (via MADS box) with SOX18. Interacts with PHF7; the interaction promotes MEF2C binding to its transcription targets. Post-translationally, phosphorylated on Ser-59; which enhances DNA binding activity. Phosphorylated on Ser-386; which is required for Lys-381 sumoylation and inhibits transcriptional activity. In terms of processing, acetylated by p300 on several sites in diffentiating myocytes. Acetylation on Lys-4 increases DNA binding and transactivation. Sumoylated on Lys-381 with SUMO2 but not SUMO1; which represses transcriptional activity. Post-translationally, proteolytically cleaved in cerebellar granule neurons on several sites by caspase 3 and caspase 7 following neurotoxicity. Preferentially cleaves the CDK5-mediated hyperphosphorylated form which leads to neuron apoptosis and transcriptional inactivation.

It is found in the nucleus. Its subcellular location is the cytoplasm. It localises to the sarcoplasm. Its function is as follows. Transcription activator which binds specifically to the MEF2 element present in the regulatory regions of many muscle-specific genes. Controls cardiac morphogenesis and myogenesis, and is also involved in vascular development. Enhances transcriptional activation mediated by SOX18. Plays an essential role in hippocampal-dependent learning and memory by suppressing the number of excitatory synapses and thus regulating basal and evoked synaptic transmission. Crucial for normal neuronal development, distribution, and electrical activity in the neocortex. Necessary for proper development of megakaryocytes and platelets and for bone marrow B-lymphopoiesis. Required for B-cell survival and proliferation in response to BCR stimulation, efficient IgG1 antibody responses to T-cell-dependent antigens and for normal induction of germinal center B-cells. May also be involved in neurogenesis and in the development of cortical architecture. This Sus scrofa (Pig) protein is Myocyte-specific enhancer factor 2C.